Consider the following 361-residue polypeptide: MNDLDQLEKKIMDEIAEAGDEQTVEAVRVAALGKKGTVSEKLKTLGSMSPEERQVMGPAINGLKNRVTEALAARRAELRDIAIAARLEREKVDVTLPMPRPPAERGRIHPITQVIDEIAAIFGDLGFSIAEGPDIETDYYNFTALNFPEGHPAREMHDTFFFEPDEKGERKLLRTHTSPVQIRTMEAQKPPIRIVIPGKTYRSDSDATHTPMFHQLEGLVIDKTANVANMKWVLTEFCKAYFEVPSLNMRFRPSFFPFTEPSLEVDIQCDRSKPGEIRFGEGNDWLEILGCGMVHSNVLRHGGLDPDEYQGFAWGMGIDRIAMLKYGMPDLRAFFDADVRWLEHYGFRPLDLPTLFGGLSS.

Mg(2+) is bound at residue E260.

It belongs to the class-II aminoacyl-tRNA synthetase family. Phe-tRNA synthetase alpha subunit type 1 subfamily. As to quaternary structure, tetramer of two alpha and two beta subunits. The cofactor is Mg(2+).

The protein localises to the cytoplasm. The enzyme catalyses tRNA(Phe) + L-phenylalanine + ATP = L-phenylalanyl-tRNA(Phe) + AMP + diphosphate + H(+). The protein is Phenylalanine--tRNA ligase alpha subunit of Chelativorans sp. (strain BNC1).